Here is a 286-residue protein sequence, read N- to C-terminus: Thymidylate synthase (286 aa).

Residue 140 to 141 (RR) participates in dUMP binding. Catalysis depends on Cys161, which acts as the Nucleophile. Residues 185–188 (RSND), Asn196, and 226–228 (HIY) contribute to the dUMP site. Asp188 contacts (6R)-5,10-methylene-5,6,7,8-tetrahydrofolate. A (6R)-5,10-methylene-5,6,7,8-tetrahydrofolate-binding site is contributed by Ala285.

It belongs to the thymidylate synthase family. Bacterial-type ThyA subfamily. In terms of assembly, homodimer.

It localises to the cytoplasm. The catalysed reaction is dUMP + (6R)-5,10-methylene-5,6,7,8-tetrahydrofolate = 7,8-dihydrofolate + dTMP. It functions in the pathway pyrimidine metabolism; dTTP biosynthesis. Its function is as follows. Catalyzes the reductive methylation of 2'-deoxyuridine-5'-monophosphate (dUMP) to 2'-deoxythymidine-5'-monophosphate (dTMP) while utilizing 5,10-methylenetetrahydrofolate (mTHF) as the methyl donor and reductant in the reaction, yielding dihydrofolate (DHF) as a by-product. This enzymatic reaction provides an intracellular de novo source of dTMP, an essential precursor for DNA biosynthesis. This Streptococcus thermophilus (strain ATCC BAA-250 / LMG 18311) protein is Thymidylate synthase.